The sequence spans 731 residues: Alpha-1,4-glucan:maltose-1-phosphate maltosyltransferase (731 aa).

Residues 1–10 (MEAQHNETEA) show a composition bias toward basic and acidic residues. Residues 1-31 (MEAQHNETEAAGKPAAKKTTRTRKPRASKQA) form a disordered region. A compositionally biased stretch (basic residues) spans 15 to 27 (AAKKTTRTRKPRA). Positions 321, 381, and 416 each coordinate alpha-maltose 1-phosphate. Aspartate 451 functions as the Nucleophile in the catalytic mechanism. An alpha-maltose 1-phosphate-binding site is contributed by asparagine 452. The active-site Proton donor is glutamate 480. Alpha-maltose 1-phosphate is bound at residue 590–591 (KF).

The protein belongs to the glycosyl hydrolase 13 family. GlgE subfamily. Homodimer.

The catalysed reaction is alpha-maltose 1-phosphate + [(1-&gt;4)-alpha-D-glucosyl](n) = [(1-&gt;4)-alpha-D-glucosyl](n+2) + phosphate. Its function is as follows. Maltosyltransferase that uses maltose 1-phosphate (M1P) as the sugar donor to elongate linear or branched alpha-(1-&gt;4)-glucans. Is involved in a branched alpha-glucan biosynthetic pathway from trehalose, together with TreS, Mak and GlgB. The polypeptide is Alpha-1,4-glucan:maltose-1-phosphate maltosyltransferase (Bifidobacterium animalis subsp. lactis (strain Bl-04 / DGCC2908 / RB 4825 / SD5219)).